A 514-amino-acid polypeptide reads, in one-letter code: Histidine ammonia-lyase (514 aa).

A cross-link (5-imidazolinone (Ala-Gly)) is located at residues 144-146 (ASG). A 2,3-didehydroalanine (Ser) modification is found at S145.

It belongs to the PAL/histidase family. Contains an active site 4-methylidene-imidazol-5-one (MIO), which is formed autocatalytically by cyclization and dehydration of residues Ala-Ser-Gly.

It is found in the cytoplasm. It carries out the reaction L-histidine = trans-urocanate + NH4(+). It participates in amino-acid degradation; L-histidine degradation into L-glutamate; N-formimidoyl-L-glutamate from L-histidine: step 1/3. The sequence is that of Histidine ammonia-lyase from Rhodospirillum rubrum (strain ATCC 11170 / ATH 1.1.1 / DSM 467 / LMG 4362 / NCIMB 8255 / S1).